A 283-amino-acid polypeptide reads, in one-letter code: 2-dehydro-3-deoxyphosphooctonate aldolase (283 aa).

This sequence belongs to the KdsA family.

The protein resides in the cytoplasm. The catalysed reaction is D-arabinose 5-phosphate + phosphoenolpyruvate + H2O = 3-deoxy-alpha-D-manno-2-octulosonate-8-phosphate + phosphate. It functions in the pathway carbohydrate biosynthesis; 3-deoxy-D-manno-octulosonate biosynthesis; 3-deoxy-D-manno-octulosonate from D-ribulose 5-phosphate: step 2/3. The protein operates within bacterial outer membrane biogenesis; lipopolysaccharide biosynthesis. The protein is 2-dehydro-3-deoxyphosphooctonate aldolase of Parasynechococcus marenigrum (strain WH8102).